The chain runs to 556 residues: MSKSIEKFPKELVSPIAQLHSLVEKNSKLHIKELFAAEQDRFQNYSVKFDQLVFDYSKHRITKSVLEQLFALAKTKQLTHWIERLFSQDKVNCTEQRAAMHWALRLPSEYSKFPELTKQVHTQLQRMYVLVEKIHAGQYRGATGEVIQDVVNIGVGGSDLGPQMVTHALCDFKVKTAKPLNVHFVSTMDGSQLSDLLHQLRPETTLFIISSKSFGTIDTLSNAQTVRQWLEKALGKHDRVVKSHFIGVSTKAEKMTEWGIAPENQLLLWDWVGGRYSLWSCIGFPIALTIGIDGFQQLLAGAHAVDEHFQNTNFEQNIPVLMALLGIWNNNFLNIQTHAVLPYDGRLKYFAAYLQQLEMESNGKSVQRDGQKVELDTCPIVWGEVGPNAQHAFYQLLHQGTQAVSCDFIAPIQRYNADHFTYVENAEALIEQHHLALSNCLAQSRLLAFGNEALDSAELKNLPIYKQYEGNQPSSTLLLKELNPYSLGMLIALYEHKVFVQSVIWNINPFDQWGVEKGKQIADQLLPILNGAQNDLSALDASTRGLIKILLGKVDG.

The active-site Proton donor is Glu360. Residues His391 and Lys519 contribute to the active site.

Belongs to the GPI family.

It is found in the cytoplasm. It carries out the reaction alpha-D-glucose 6-phosphate = beta-D-fructose 6-phosphate. It functions in the pathway carbohydrate biosynthesis; gluconeogenesis. The protein operates within carbohydrate degradation; glycolysis; D-glyceraldehyde 3-phosphate and glycerone phosphate from D-glucose: step 2/4. In terms of biological role, catalyzes the reversible isomerization of glucose-6-phosphate to fructose-6-phosphate. The sequence is that of Glucose-6-phosphate isomerase from Acinetobacter baumannii (strain SDF).